The following is a 92-amino-acid chain: Larval cuticle protein 9 (92 aa).

The signal sequence occupies residues 1 to 16 (MKFVIVLACLLAVVFA). A Chitin-binding type R&amp;R domain is found at 31 to 92 (LLDFNYAYEL…TGYHPKVVEA (62 aa)).

In terms of biological role, component of the cuticle of the larva. This chain is Larval cuticle protein 9 (Lcp9), found in Drosophila melanogaster (Fruit fly).